Reading from the N-terminus, the 306-residue chain is MRNFVWAEELDADRIDDVRALLLAARETDGRPEVEPDGPLPGEFSGPRHLLCFSGEGAAAELVGYAHLDVRGDAFGRQVAELIVHPAHRRRGHGTALLEEVLRHADRLRIWSHGDHPAAARLAERFGLSRARELLVMSASSAEQEWPKPRLPEGVRLRTFVPGQDEEAVIAVNARAFDWHPEQSQFDVKALREAQRESWFDADGFFLAENAEGRVVGFHWTKVHPANPNRFGGRPVGEVYVVGVDPDAQGGGLGKALTLAGLRHLRQRGLEQVILYVEGDNAPAIAVYRKLGFETVETDVQYAQGS.

2 N-acetyltransferase domains span residues 5-162 and 155-306; these read VWAE…TFVP and VRLR…AQGS. Acetyl-CoA-binding positions include 82–84 and 90–95; these read LIV and RRGHGT. Residues E182, K222, and E238 each contribute to the 1D-myo-inositol 2-(L-cysteinylamino)-2-deoxy-alpha-D-glucopyranoside site. Acetyl-CoA-binding positions include 242-244 and 249-255; these read VGV and QGGGLGK. Residue Y276 coordinates 1D-myo-inositol 2-(L-cysteinylamino)-2-deoxy-alpha-D-glucopyranoside.

Belongs to the acetyltransferase family. MshD subfamily. As to quaternary structure, monomer.

It carries out the reaction 1D-myo-inositol 2-(L-cysteinylamino)-2-deoxy-alpha-D-glucopyranoside + acetyl-CoA = mycothiol + CoA + H(+). Catalyzes the transfer of acetyl from acetyl-CoA to desacetylmycothiol (Cys-GlcN-Ins) to form mycothiol. This is Mycothiol acetyltransferase from Saccharomonospora viridis (strain ATCC 15386 / DSM 43017 / JCM 3036 / CCUG 5913 / NBRC 12207 / NCIMB 9602 / P101) (Thermoactinomyces viridis).